Here is a 750-residue protein sequence, read N- to C-terminus: K(+)-insensitive pyrophosphate-energized proton pump (750 aa).

The next 5 membrane-spanning stretches (helical) occupy residues 1-21, 51-71, 78-98, 133-153, and 161-181; these read MYGLVVCLFGMIFGLIQYQGI, FIIILWALVAAIIVAYFGGLN, VVFILACSLLGIAGSYTVAWF, IGMLLISIELFAMLCILLFIP, and FIGFAIGESLGASVLRIAGGI. Lysine 184 provides a ligand contact to substrate. Residues aspartate 187, aspartate 191, and aspartate 216 each coordinate Mg(2+). The next 6 membrane-spanning stretches (helical) occupy residues 227–247, 257–277, 301–321, 327–347, 391–411, and 420–440; these read DGFETYGVTGVALISFILLAI, LVWIFAMRLVMIVASAVSYWV, LVWLTSIVSIVLTYIASYMLI, GTMWWKLASIITCGTIAGALI, WMGLAIIVLMGAAFGFSTLGL, and VFAFGLVAFGFLSMGPVTIAV. Aspartate 448 contacts Mg(2+). 4 consecutive transmembrane segments (helical) span residues 503–523, 538–558, 607–627, and 629–649; these read VLIGTAVVGSTTMIFSIIMIL, ILWPPFLLGLLMGGAVIYWFT, GMINLFLTIFFSTLAFACLES, and LFIGYLISIALFGLYQAIFMA. Residues aspartate 656, aspartate 681, and aspartate 685 each contribute to the Ca(2+) site. Lysine 688 is a binding site for substrate. Transmembrane regions (helical) follow at residues 694-714 and 716-736; these read ALNPIIKFTTLFGLLAIELAI and LPTTISVSLAVVFFLLSLVFV.

Belongs to the H(+)-translocating pyrophosphatase (TC 3.A.10) family. K(+)-insensitive subfamily. Homodimer. Mg(2+) is required as a cofactor.

It is found in the cell inner membrane. It carries out the reaction diphosphate + H2O + H(+)(in) = 2 phosphate + 2 H(+)(out). Proton pump that utilizes the energy of pyrophosphate hydrolysis as the driving force for proton movement across the membrane. Generates a proton motive force. This Chlorobaculum tepidum (strain ATCC 49652 / DSM 12025 / NBRC 103806 / TLS) (Chlorobium tepidum) protein is K(+)-insensitive pyrophosphate-energized proton pump.